Reading from the N-terminus, the 243-residue chain is uncharacterized protein (243 aa).

The protein resides in the nucleus. It localises to the nucleolus. This is an uncharacterized protein from Schizosaccharomyces pombe (strain 972 / ATCC 24843) (Fission yeast).